Reading from the N-terminus, the 725-residue chain is ABC transporter G family member 7 (725 aa).

Residues 12 to 34 (VVSGIGGNGVGGALAAVAAALLV) traverse the membrane as a helical segment. An ABC transporter domain is found at 70-316 (IRWRNITCSL…YFGNFGFLCP (247 aa)). 108-115 (GPSGSGKT) serves as a coordination point for ATP. An ABC transmembrane type-2 domain is found at 392–603 (RQFFLLLKRA…AFQGLCINEF (212 aa)). 4 consecutive transmembrane segments (helical) span residues 446-466 (LLQV…VGVF), 493-513 (IAEI…LYPM), 528-548 (GIVT…GAMV), and 553-573 (AAMA…GYYV). A disordered region spans residues 676-725 (NSGVQLDKAEVDQTEKPEDDDINQPLDDQNQTSDSDDELDEIRPFVLEGL). Residues 682 to 691 (DKAEVDQTEK) are compositionally biased toward basic and acidic residues.

Belongs to the ABC transporter superfamily. ABCG family. Eye pigment precursor importer (TC 3.A.1.204) subfamily.

Its subcellular location is the membrane. The protein is ABC transporter G family member 7 (ABCG7) of Arabidopsis thaliana (Mouse-ear cress).